We begin with the raw amino-acid sequence, 388 residues long: Succinate--CoA ligase [ADP-forming] subunit beta (388 aa).

The ATP-grasp domain maps to 9–244 (KQLFAEYGLP…PSQEDEREAH (236 aa)). Residues Lys-46, 53–55 (GRG), Glu-99, Thr-102, and Glu-107 contribute to the ATP site. Mg(2+) contacts are provided by Asn-199 and Asp-213. Residues Asn-264 and 321-323 (GIV) contribute to the substrate site.

It belongs to the succinate/malate CoA ligase beta subunit family. In terms of assembly, heterotetramer of two alpha and two beta subunits. Mg(2+) serves as cofactor.

The enzyme catalyses succinate + ATP + CoA = succinyl-CoA + ADP + phosphate. The catalysed reaction is GTP + succinate + CoA = succinyl-CoA + GDP + phosphate. It participates in carbohydrate metabolism; tricarboxylic acid cycle; succinate from succinyl-CoA (ligase route): step 1/1. Its function is as follows. Succinyl-CoA synthetase functions in the citric acid cycle (TCA), coupling the hydrolysis of succinyl-CoA to the synthesis of either ATP or GTP and thus represents the only step of substrate-level phosphorylation in the TCA. The beta subunit provides nucleotide specificity of the enzyme and binds the substrate succinate, while the binding sites for coenzyme A and phosphate are found in the alpha subunit. The protein is Succinate--CoA ligase [ADP-forming] subunit beta of Colwellia psychrerythraea (strain 34H / ATCC BAA-681) (Vibrio psychroerythus).